We begin with the raw amino-acid sequence, 256 residues long: MTPDIRPLVAGNWKMNGTRASLDQIKAMAEGVKGDLSARVDALICPPATLLYVATALCDDSPLMIGAQDCHQKQSGAHTGEVSAEMVADCFGTHVIVGHSERRTDHGEGDALVRAKTEAAHGADLVAIVCVGETEEERKAGRTLDILKRQLSESLPDQATAENTVIAYEPVWAIGTGLTPTVSDVEEAHAFMRRELVSRFGAEGGKMRILYGGSVKPSNAKELMGVANVDGALIGGASLKADDFLAIYRAYEELTA.

Substrate is bound at residue 12–14 (NWK). His-99 functions as the Electrophile in the catalytic mechanism. The Proton acceptor role is filled by Glu-169. Residues Gly-175, Ser-214, and 235–236 (GG) each bind substrate.

The protein belongs to the triosephosphate isomerase family. Homodimer.

It is found in the cytoplasm. The catalysed reaction is D-glyceraldehyde 3-phosphate = dihydroxyacetone phosphate. It participates in carbohydrate biosynthesis; gluconeogenesis. Its pathway is carbohydrate degradation; glycolysis; D-glyceraldehyde 3-phosphate from glycerone phosphate: step 1/1. Its function is as follows. Involved in the gluconeogenesis. Catalyzes stereospecifically the conversion of dihydroxyacetone phosphate (DHAP) to D-glyceraldehyde-3-phosphate (G3P). This chain is Triosephosphate isomerase, found in Rhizobium meliloti (strain 1021) (Ensifer meliloti).